Here is a 563-residue protein sequence, read N- to C-terminus: GTPase Obg (563 aa).

In terms of domain architecture, Obg spans 2 to 168 (SDFVDRVTVH…RDVILELKSI (167 aa)). The OBG-type G domain occupies 169-349 (ADVALVGFPS…LNWALADLVT (181 aa)). GTP contacts are provided by residues 175–182 (GFPSAGKS), 200–204 (FTTLV), 221–224 (DVPG), 301–304 (NKVD), and 330–332 (STA). Mg(2+) is bound by residues Ser182 and Thr202. The OCT domain maps to 383 to 469 (DEGGNALDFT…DRAVEFDWDP (87 aa)). The disordered stretch occupies residues 525–563 (MMAERKAGHWADPSVDDDRHDETSLFGRGETADDEDVEQ).

The protein belongs to the TRAFAC class OBG-HflX-like GTPase superfamily. OBG GTPase family. In terms of assembly, monomer. Mg(2+) serves as cofactor.

Its subcellular location is the cytoplasm. An essential GTPase which binds GTP, GDP and possibly (p)ppGpp with moderate affinity, with high nucleotide exchange rates and a fairly low GTP hydrolysis rate. Plays a role in control of the cell cycle, stress response, ribosome biogenesis and in those bacteria that undergo differentiation, in morphogenesis control. The chain is GTPase Obg from Bifidobacterium adolescentis (strain ATCC 15703 / DSM 20083 / NCTC 11814 / E194a).